The chain runs to 326 residues: Biotin synthase (326 aa).

In terms of domain architecture, Radical SAM core spans 48–277 (FGAGKVDLCS…SARIRMAGGR (230 aa)). Residues C66, C70, and C73 each contribute to the [4Fe-4S] cluster site. [2Fe-2S] cluster contacts are provided by S110, C142, C202, and R272.

This sequence belongs to the radical SAM superfamily. Biotin synthase family. In terms of assembly, homodimer. [4Fe-4S] cluster is required as a cofactor. [2Fe-2S] cluster serves as cofactor.

The enzyme catalyses (4R,5S)-dethiobiotin + (sulfur carrier)-SH + 2 reduced [2Fe-2S]-[ferredoxin] + 2 S-adenosyl-L-methionine = (sulfur carrier)-H + biotin + 2 5'-deoxyadenosine + 2 L-methionine + 2 oxidized [2Fe-2S]-[ferredoxin]. It functions in the pathway cofactor biosynthesis; biotin biosynthesis; biotin from 7,8-diaminononanoate: step 2/2. Catalyzes the conversion of dethiobiotin (DTB) to biotin by the insertion of a sulfur atom into dethiobiotin via a radical-based mechanism. The polypeptide is Biotin synthase (Heliobacterium modesticaldum (strain ATCC 51547 / Ice1)).